Consider the following 246-residue polypeptide: Deoxycytidylate 5-hydroxymethyltransferase (246 aa).

C148 is an active-site residue.

The protein belongs to the thymidylate synthase family.

The enzyme catalyses dCMP + (6R)-5,10-methylene-5,6,7,8-tetrahydrofolate + H2O = 5-hydroxymethyl-dCMP + (6S)-5,6,7,8-tetrahydrofolate. This chain is Deoxycytidylate 5-hydroxymethyltransferase (42), found in Enterobacteria phage T4 (Bacteriophage T4).